Here is a 176-residue protein sequence, read N- to C-terminus: Vitamin K epoxide reductase complex subunit 1-like protein 1 (176 aa).

The Cytoplasmic segment spans residues 1-13 (MAAPVLLRVSVPR). The chain crosses the membrane as a helical span at residues 14-36 (WERVARYAVCAAGILLSIYAYHV). The Lumenal portion of the chain corresponds to 37–87 (EREKERDPEHRALCDLGPWVKCSAALASRWGRGFGLLGSIFGKDGVLNQPN). C50 and C58 are disulfide-bonded. N87 serves as a coordination point for (S)-warfarin. The helical transmembrane segment at 88 to 102 (SVFGLIFYILQLLLG) threads the bilayer. Residues 103–107 (MTASA) are Cytoplasmic-facing. Residues 108–135 (VAALVLMTSSIVSVVGSLYLAYILYFVL) form a helical membrane-spanning segment. Topologically, residues 136-138 (KEF) are lumenal. A disulfide bridge connects residues C139 and C142. Residues 139–160 (CIICVTTYVLNFLLLIINYKRL) form a helical membrane-spanning segment. Positions 142 and 146 each coordinate phylloquinone. Y146 contacts (S)-warfarin. Topologically, residues 161-176 (VYLNEAWKRQLQPKED) are cytoplasmic.

Belongs to the VKOR family. As to expression, detected in testis and lung.

It is found in the endoplasmic reticulum membrane. The enzyme catalyses phylloquinone + [protein]-disulfide + H2O = 2,3-epoxyphylloquinone + [protein]-dithiol. It carries out the reaction phylloquinol + [protein]-disulfide = phylloquinone + [protein]-dithiol. Its activity is regulated as follows. Inhibited by warfarin (coumadin). Warfarin locks VKORC1 in both redox states into the closed conformation. Its function is as follows. Involved in vitamin K metabolism. Can reduce inactive vitamin K 2,3-epoxide to active vitamin K, and may contribute to vitamin K-mediated protection against oxidative stress. Plays a role in vitamin K-dependent gamma-carboxylation of Glu residues in target proteins. The protein is Vitamin K epoxide reductase complex subunit 1-like protein 1 (Vkorc1l1) of Mus musculus (Mouse).